We begin with the raw amino-acid sequence, 281 residues long: Cell division protein DivIB (281 aa).

The disordered stretch occupies residues 1 to 36 (MARKRITRRDPEEELSKFLRHEPGQGQETRKLSSQL). Topologically, residues 1–46 (MARKRITRRDPEEELSKFLRHEPGQGQETRKLSSQLTSLKKERRRG) are cytoplasmic. A compositionally biased stretch (basic and acidic residues) spans 8–31 (RRDPEEELSKFLRHEPGQGQETRK). Residues 47–69 (LLTRLGSIMAVCLLAIAFLTYYV) form a helical membrane-spanning segment. The Extracellular segment spans residues 70 to 281 (SPLADVSTVR…SAEKKAYGLS (212 aa)). Positions 73–144 (ADVSTVRVLG…NTLNMQVHER (72 aa)) constitute a POTRA domain.

It belongs to the FtsQ/DivIB family. DivIB subfamily.

The protein resides in the cell membrane. Functionally, cell division protein that may be involved in stabilizing or promoting the assembly of the division complex. The chain is Cell division protein DivIB from Lactobacillus delbrueckii subsp. bulgaricus (strain ATCC 11842 / DSM 20081 / BCRC 10696 / JCM 1002 / NBRC 13953 / NCIMB 11778 / NCTC 12712 / WDCM 00102 / Lb 14).